The sequence spans 336 residues: Holliday junction branch migration complex subunit RuvB (336 aa).

Positions 4 to 184 are large ATPase domain (RuvB-L); it reads ADRLVSADSS…FGIVQRLEFY (181 aa). ATP is bound by residues isoleucine 23, arginine 24, glycine 65, lysine 68, threonine 69, threonine 70, 131–133, arginine 174, tyrosine 184, and arginine 221; that span reads EDY. Residue threonine 69 coordinates Mg(2+). The small ATPAse domain (RuvB-S) stretch occupies residues 185-255; the sequence is QIPDLQHIVS…IAAQALDMLN (71 aa). Positions 258–336 are head domain (RuvB-H); the sequence is AEGFDYMDRK…HFGITPPEMP (79 aa). DNA-binding residues include arginine 294, arginine 313, and arginine 318.

Belongs to the RuvB family. In terms of assembly, homohexamer. Forms an RuvA(8)-RuvB(12)-Holliday junction (HJ) complex. HJ DNA is sandwiched between 2 RuvA tetramers; dsDNA enters through RuvA and exits via RuvB. An RuvB hexamer assembles on each DNA strand where it exits the tetramer. Each RuvB hexamer is contacted by two RuvA subunits (via domain III) on 2 adjacent RuvB subunits; this complex drives branch migration. In the full resolvosome a probable DNA-RuvA(4)-RuvB(12)-RuvC(2) complex forms which resolves the HJ.

Its subcellular location is the cytoplasm. The catalysed reaction is ATP + H2O = ADP + phosphate + H(+). Functionally, the RuvA-RuvB-RuvC complex processes Holliday junction (HJ) DNA during genetic recombination and DNA repair, while the RuvA-RuvB complex plays an important role in the rescue of blocked DNA replication forks via replication fork reversal (RFR). RuvA specifically binds to HJ cruciform DNA, conferring on it an open structure. The RuvB hexamer acts as an ATP-dependent pump, pulling dsDNA into and through the RuvAB complex. RuvB forms 2 homohexamers on either side of HJ DNA bound by 1 or 2 RuvA tetramers; 4 subunits per hexamer contact DNA at a time. Coordinated motions by a converter formed by DNA-disengaged RuvB subunits stimulates ATP hydrolysis and nucleotide exchange. Immobilization of the converter enables RuvB to convert the ATP-contained energy into a lever motion, pulling 2 nucleotides of DNA out of the RuvA tetramer per ATP hydrolyzed, thus driving DNA branch migration. The RuvB motors rotate together with the DNA substrate, which together with the progressing nucleotide cycle form the mechanistic basis for DNA recombination by continuous HJ branch migration. Branch migration allows RuvC to scan DNA until it finds its consensus sequence, where it cleaves and resolves cruciform DNA. The chain is Holliday junction branch migration complex subunit RuvB from Klebsiella pneumoniae subsp. pneumoniae (strain ATCC 700721 / MGH 78578).